A 202-amino-acid chain; its full sequence is Rho GDP-dissociation inhibitor (202 aa).

Ala-2 bears the N-acetylalanine mark. A Phosphothreonine modification is found at Thr-27. Ser-40 carries the post-translational modification Phosphoserine.

Belongs to the Rho GDI family.

It is found in the cytoplasm. Regulates the GDP/GTP exchange reaction of the Rho proteins by inhibiting the dissociation of GDP from them, and the subsequent binding of GTP to them. The sequence is that of Rho GDP-dissociation inhibitor (RDI1) from Saccharomyces cerevisiae (strain ATCC 204508 / S288c) (Baker's yeast).